Consider the following 153-residue polypeptide: Cytochrome c-type biogenesis protein CcmE (153 aa).

Residues 1-8 (MTTRRGRR) lie on the Cytoplasmic side of the membrane. The chain crosses the membrane as a helical; Signal-anchor for type II membrane protein span at residues 9 to 29 (ALLIAGGVGLLALAAALVLNA). Topologically, residues 30–153 (LRSNLVFFFS…PSATLQTEAR (124 aa)) are periplasmic. Positions 124 and 128 each coordinate heme.

Belongs to the CcmE/CycJ family.

The protein localises to the cell inner membrane. Its function is as follows. Heme chaperone required for the biogenesis of c-type cytochromes. Transiently binds heme delivered by CcmC and transfers the heme to apo-cytochromes in a process facilitated by CcmF and CcmH. This Bordetella parapertussis (strain 12822 / ATCC BAA-587 / NCTC 13253) protein is Cytochrome c-type biogenesis protein CcmE.